The primary structure comprises 829 residues: Periplasmic nitrate reductase (829 aa).

A signal peptide (tat-type signal) is located at residues 1–30 (MKLSRRDFMKANAVAAAAAVAGVSAPTLAA). A 4Fe-4S Mo/W bis-MGD-type domain is found at 41 to 97 (ITWDKAPCRFCGTGCSVLVGSQDGRVVATQGDPDAPVNRGLNCIKGYFLSKIMYGQD). 4 residues coordinate [4Fe-4S] cluster: Cys-48, Cys-51, Cys-55, and Cys-83. Mo-bis(molybdopterin guanine dinucleotide) contacts are provided by residues Lys-85, Gln-152, Asn-177, Cys-181, 214–221 (WGSNMAEM), 245–249 (STFEH), 264–266 (QTD), Met-374, Gln-378, Asn-484, 510–511 (SD), Lys-533, Asp-560, and 719–728 (TGRVLEHWHT). Phe-795 is a binding site for substrate. Mo-bis(molybdopterin guanine dinucleotide) is bound by residues Asn-803 and Lys-820.

Belongs to the prokaryotic molybdopterin-containing oxidoreductase family. NasA/NapA/NarB subfamily. As to quaternary structure, component of the periplasmic nitrate reductase NapAB complex composed of NapA and NapB. Requires [4Fe-4S] cluster as cofactor. Mo-bis(molybdopterin guanine dinucleotide) is required as a cofactor. Post-translationally, predicted to be exported by the Tat system. The position of the signal peptide cleavage has not been experimentally proven.

The protein localises to the periplasm. The catalysed reaction is 2 Fe(II)-[cytochrome] + nitrate + 2 H(+) = 2 Fe(III)-[cytochrome] + nitrite + H2O. In terms of biological role, catalytic subunit of the periplasmic nitrate reductase complex NapAB. Receives electrons from NapB and catalyzes the reduction of nitrate to nitrite. The polypeptide is Periplasmic nitrate reductase (Aeromonas hydrophila subsp. hydrophila (strain ATCC 7966 / DSM 30187 / BCRC 13018 / CCUG 14551 / JCM 1027 / KCTC 2358 / NCIMB 9240 / NCTC 8049)).